A 154-amino-acid polypeptide reads, in one-letter code: Ribosome maturation factor RimP (154 aa).

This sequence belongs to the RimP family.

Its subcellular location is the cytoplasm. Required for maturation of 30S ribosomal subunits. In Acetivibrio thermocellus (strain ATCC 27405 / DSM 1237 / JCM 9322 / NBRC 103400 / NCIMB 10682 / NRRL B-4536 / VPI 7372) (Clostridium thermocellum), this protein is Ribosome maturation factor RimP.